A 390-amino-acid chain; its full sequence is GTPase Obg (390 aa).

Residues 1 to 159 (MKFVDEAVVK…REIRLELLLL (159 aa)) form the Obg domain. The 174-residue stretch at 160 to 333 (ADVGMLGLPN…LCYKLADFME (174 aa)) folds into the OBG-type G domain. Residues 166 to 173 (GLPNAGKS), 191 to 195 (FTTLI), 213 to 216 (DIPG), 283 to 286 (NKVD), and 314 to 316 (SAI) each bind GTP. Mg(2+) contacts are provided by Ser173 and Thr193. Positions 367–382 (TEDDDDWDDWDDEEDD) are enriched in acidic residues. Residues 367-390 (TEDDDDWDDWDDEEDDGHVVYVRD) are disordered.

This sequence belongs to the TRAFAC class OBG-HflX-like GTPase superfamily. OBG GTPase family. In terms of assembly, monomer. The cofactor is Mg(2+).

It is found in the cytoplasm. An essential GTPase which binds GTP, GDP and possibly (p)ppGpp with moderate affinity, with high nucleotide exchange rates and a fairly low GTP hydrolysis rate. Plays a role in control of the cell cycle, stress response, ribosome biogenesis and in those bacteria that undergo differentiation, in morphogenesis control. This is GTPase Obg from Vibrio parahaemolyticus serotype O3:K6 (strain RIMD 2210633).